Reading from the N-terminus, the 355-residue chain is UDP-N-acetylglucosamine--N-acetylmuramyl-(pentapeptide) pyrophosphoryl-undecaprenol N-acetylglucosamine transferase (355 aa).

Residues 7 to 9 (TGG), asparagine 119, arginine 159, serine 187, isoleucine 241, and glutamine 286 contribute to the UDP-N-acetyl-alpha-D-glucosamine site.

This sequence belongs to the glycosyltransferase 28 family. MurG subfamily.

Its subcellular location is the cell inner membrane. It carries out the reaction di-trans,octa-cis-undecaprenyl diphospho-N-acetyl-alpha-D-muramoyl-L-alanyl-D-glutamyl-meso-2,6-diaminopimeloyl-D-alanyl-D-alanine + UDP-N-acetyl-alpha-D-glucosamine = di-trans,octa-cis-undecaprenyl diphospho-[N-acetyl-alpha-D-glucosaminyl-(1-&gt;4)]-N-acetyl-alpha-D-muramoyl-L-alanyl-D-glutamyl-meso-2,6-diaminopimeloyl-D-alanyl-D-alanine + UDP + H(+). The protein operates within cell wall biogenesis; peptidoglycan biosynthesis. Its function is as follows. Cell wall formation. Catalyzes the transfer of a GlcNAc subunit on undecaprenyl-pyrophosphoryl-MurNAc-pentapeptide (lipid intermediate I) to form undecaprenyl-pyrophosphoryl-MurNAc-(pentapeptide)GlcNAc (lipid intermediate II). The protein is UDP-N-acetylglucosamine--N-acetylmuramyl-(pentapeptide) pyrophosphoryl-undecaprenol N-acetylglucosamine transferase of Nitrosomonas eutropha (strain DSM 101675 / C91 / Nm57).